The sequence spans 81 residues: uncharacterized protein (81 aa).

A mitochondrion-targeting transit peptide spans 1–20 (MYSRVLSVAAIVTMALAVQA). The tract at residues 27-53 (YGNTTNSTGTTNGTNGTNTTTSSTATQ) is disordered. Residues 28–53 (GNTTNSTGTTNGTNGTNTTTSSTATQ) show a composition bias toward low complexity. The helical transmembrane segment at 59–79 (ITNFSSGAFVIAMIAVACSVM) threads the bilayer.

It is found in the mitochondrion membrane. This is an uncharacterized protein from Schizosaccharomyces pombe (strain 972 / ATCC 24843) (Fission yeast).